We begin with the raw amino-acid sequence, 184 residues long: GMP synthase [glutamine-hydrolyzing] subunit A (184 aa).

The Glutamine amidotransferase type-1 domain maps to 3-184 (PICVVNNYGQ…YENFDAICTE (182 aa)). The active-site Nucleophile is C75. Active-site residues include H162 and E164.

Heterodimer composed of a glutamine amidotransferase subunit (A) and a GMP-binding subunit (B).

The catalysed reaction is XMP + L-glutamine + ATP + H2O = GMP + L-glutamate + AMP + diphosphate + 2 H(+). It functions in the pathway purine metabolism; GMP biosynthesis; GMP from XMP (L-Gln route): step 1/1. Catalyzes the synthesis of GMP from XMP. In Methanoregula boonei (strain DSM 21154 / JCM 14090 / 6A8), this protein is GMP synthase [glutamine-hydrolyzing] subunit A.